We begin with the raw amino-acid sequence, 275 residues long: MGQKINPTGFRLAVTKNWTSRWYANNTDFAKMLKEDVDVRIYLKKKLKNASVSKVVIERPAKNARITIYSSRPGVVIGKKGEDIEVLRRELQKRMGVPVHVNIEEIRKPEVDAQLIADSITQQLEKRIMFRRAMKRAMQNAMRLGAQGIKIMSSGRLNGAEIARREWYREGRVPLHTLKADIDYATSEAETTYGIIGVKVWVYKGDTLGRGAEAQAAATSAEPAAEEKKTRRAPSKTAARKPAAGTDKPLVAAKPAVKRVRKVETPAADTQKSGE.

The region spanning 39–107 (VRIYLKKKLK…PVHVNIEEIR (69 aa)) is the KH type-2 domain. Positions 216–275 (AAATSAEPAAEEKKTRRAPSKTAARKPAAGTDKPLVAAKPAVKRVRKVETPAADTQKSGE) are disordered.

The protein belongs to the universal ribosomal protein uS3 family. Part of the 30S ribosomal subunit. Forms a tight complex with proteins S10 and S14.

Binds the lower part of the 30S subunit head. Binds mRNA in the 70S ribosome, positioning it for translation. The protein is Small ribosomal subunit protein uS3 of Polynucleobacter asymbioticus (strain DSM 18221 / CIP 109841 / QLW-P1DMWA-1) (Polynucleobacter necessarius subsp. asymbioticus).